The primary structure comprises 120 residues: Anti-adapter protein IraM (120 aa).

Belongs to the IraM/RssC family.

It localises to the cytoplasm. Its function is as follows. Involved in the stabilization of the sigma stress factor RpoS. The chain is Anti-adapter protein IraM from Salmonella choleraesuis (strain SC-B67).